Consider the following 86-residue polypeptide: HssA/B-like protein 60 (86 aa).

The segment at 11-33 is disordered; sequence GNIKSSSKSNIASSSSSSSSQSL.

It belongs to the hssA/B family.

The sequence is that of HssA/B-like protein 60 (hssl60) from Dictyostelium discoideum (Social amoeba).